The following is a 127-amino-acid chain: MVEVEHWNTLRLRIYIGENDKWEGRPLYKVIVEKLREMGIAGATVYRGIYGFGKKSRVHSSDVIRLSTDLPIIVEVVDRGHNIEKVVNVIKPMIKDGMITVEPTIVLWVGTQEEIKKFEEDAIAERQ.

This sequence belongs to the UPF0166 family.

The sequence is that of UPF0166 protein PH1503 from Pyrococcus horikoshii (strain ATCC 700860 / DSM 12428 / JCM 9974 / NBRC 100139 / OT-3).